A 96-amino-acid polypeptide reads, in one-letter code: Large ribosomal subunit protein bL27 (96 aa).

A propeptide spanning residues 1 to 9 (MLRLDLQFF) is cleaved from the precursor. A disordered region spans residues 1–36 (MLRLDLQFFSTKKGQGSSKNGRDSESKRLGSKRADG). Residues 8–19 (FFSTKKGQGSSK) are compositionally biased toward polar residues. The span at 20 to 35 (NGRDSESKRLGSKRAD) shows a compositional bias: basic and acidic residues.

The protein belongs to the bacterial ribosomal protein bL27 family. Post-translationally, the N-terminus is cleaved by ribosomal processing cysteine protease Prp.

The sequence is that of Large ribosomal subunit protein bL27 from Oceanobacillus iheyensis (strain DSM 14371 / CIP 107618 / JCM 11309 / KCTC 3954 / HTE831).